A 264-amino-acid chain; its full sequence is Ribosomal protein L11 methyltransferase (264 aa).

Residues Thr-116, Gly-137, Asp-159, and Asn-200 each contribute to the S-adenosyl-L-methionine site.

Belongs to the methyltransferase superfamily. PrmA family.

It localises to the cytoplasm. The enzyme catalyses L-lysyl-[protein] + 3 S-adenosyl-L-methionine = N(6),N(6),N(6)-trimethyl-L-lysyl-[protein] + 3 S-adenosyl-L-homocysteine + 3 H(+). Its function is as follows. Methylates ribosomal protein L11. This Thermotoga maritima (strain ATCC 43589 / DSM 3109 / JCM 10099 / NBRC 100826 / MSB8) protein is Ribosomal protein L11 methyltransferase.